Reading from the N-terminus, the 609-residue chain is Threonine--tRNA ligase (609 aa).

Positions 1–143 are editing domain; that stretch reads MRVLYIHAER…SFKPEGAKVE (143 aa). Catalytic stretches follow at residues 195–491 and 196–491; these read PRYL…PRLP and RYLD…PRLP. Residues Cys288, His339, and His460 each contribute to the Zn(2+) site.

Belongs to the class-II aminoacyl-tRNA synthetase family. In terms of assembly, homodimer. The cofactor is Zn(2+).

It localises to the cytoplasm. It catalyses the reaction tRNA(Thr) + L-threonine + ATP = L-threonyl-tRNA(Thr) + AMP + diphosphate + H(+). Functionally, catalyzes the attachment of threonine to tRNA(Thr) in a two-step reaction: L-threonine is first activated by ATP to form Thr-AMP and then transferred to the acceptor end of tRNA(Thr). Also edits incorrectly charged L-seryl-tRNA(Thr). The chain is Threonine--tRNA ligase from Pyrobaculum islandicum (strain DSM 4184 / JCM 9189 / GEO3).